Reading from the N-terminus, the 1379-residue chain is DNA-directed RNA polymerase subunit beta (1379 aa).

It belongs to the RNA polymerase beta chain family. As to quaternary structure, the RNAP catalytic core consists of 2 alpha, 1 beta, 1 beta' and 1 omega subunit. When a sigma factor is associated with the core the holoenzyme is formed, which can initiate transcription.

It catalyses the reaction RNA(n) + a ribonucleoside 5'-triphosphate = RNA(n+1) + diphosphate. DNA-dependent RNA polymerase catalyzes the transcription of DNA into RNA using the four ribonucleoside triphosphates as substrates. The sequence is that of DNA-directed RNA polymerase subunit beta from Rhizobium etli (strain ATCC 51251 / DSM 11541 / JCM 21823 / NBRC 15573 / CFN 42).